Reading from the N-terminus, the 334-residue chain is Protein-methionine-sulfoxide reductase catalytic subunit MsrP (334 aa).

The segment at residues 1-44 (MKKNQFLKESDVTAESVFFMKRRQVLKALGISAAALSLPHAAHA) is a signal peptide (tat-type signal). Mo-molybdopterin-binding positions include Asn-88, 91–92 (YE), Cys-146, Thr-181, Asn-233, Arg-238, and 249–251 (GIK).

The protein belongs to the MsrP family. In terms of assembly, heterodimer of a catalytic subunit (MsrP) and a heme-binding subunit (MsrQ). Mo-molybdopterin is required as a cofactor. In terms of processing, predicted to be exported by the Tat system. The position of the signal peptide cleavage has not been experimentally proven.

Its subcellular location is the periplasm. It catalyses the reaction L-methionyl-[protein] + a quinone + H2O = L-methionyl-(S)-S-oxide-[protein] + a quinol. It carries out the reaction L-methionyl-[protein] + a quinone + H2O = L-methionyl-(R)-S-oxide-[protein] + a quinol. Part of the MsrPQ system that repairs oxidized periplasmic proteins containing methionine sulfoxide residues (Met-O), using respiratory chain electrons. Thus protects these proteins from oxidative-stress damage caused by reactive species of oxygen and chlorine generated by the host defense mechanisms. MsrPQ is essential for the maintenance of envelope integrity under bleach stress, rescuing a wide series of structurally unrelated periplasmic proteins from methionine oxidation, including the primary periplasmic chaperone SurA and the lipoprotein Pal. The catalytic subunit MsrP is non-stereospecific, being able to reduce both (R-) and (S-) diastereoisomers of methionine sulfoxide. The chain is Protein-methionine-sulfoxide reductase catalytic subunit MsrP from Shigella boydii serotype 18 (strain CDC 3083-94 / BS512).